We begin with the raw amino-acid sequence, 443 residues long: tRNA-2-methylthio-N(6)-dimethylallyladenosine synthase (443 aa).

Positions 3–120 constitute an MTTase N-terminal domain; the sequence is SKLYIKTFGC…LPELIDARRR (118 aa). [4Fe-4S] cluster is bound by residues Cys12, Cys49, Cys83, Cys157, Cys161, and Cys164. Positions 143 to 377 constitute a Radical SAM core domain; it reads RTTGATAFVS…KIQRNAQMIS (235 aa). Residues 378-441 form the TRAM domain; the sequence is QSMVDTIQRV…SHTLRGEISD (64 aa).

This sequence belongs to the methylthiotransferase family. MiaB subfamily. Monomer. [4Fe-4S] cluster serves as cofactor.

It is found in the cytoplasm. It carries out the reaction N(6)-dimethylallyladenosine(37) in tRNA + (sulfur carrier)-SH + AH2 + 2 S-adenosyl-L-methionine = 2-methylsulfanyl-N(6)-dimethylallyladenosine(37) in tRNA + (sulfur carrier)-H + 5'-deoxyadenosine + L-methionine + A + S-adenosyl-L-homocysteine + 2 H(+). Functionally, catalyzes the methylthiolation of N6-(dimethylallyl)adenosine (i(6)A), leading to the formation of 2-methylthio-N6-(dimethylallyl)adenosine (ms(2)i(6)A) at position 37 in tRNAs that read codons beginning with uridine. This is tRNA-2-methylthio-N(6)-dimethylallyladenosine synthase from Nitrosomonas eutropha (strain DSM 101675 / C91 / Nm57).